Consider the following 926-residue polypeptide: Serine/threonine-protein kinase pakE (926 aa).

The span at S36–P55 shows a compositional bias: polar residues. Disordered stretches follow at residues S36 to L257 and Q546 to T576. Residues N56–N107 show a composition bias toward low complexity. Over residues T108–K117 the composition is skewed to polar residues. A compositionally biased stretch (low complexity) spans N134–S173. Positions R183–R204 are enriched in polar residues. The span at P215–N253 shows a compositional bias: low complexity. Positions L534 to N567 form a coiled coil. The Protein kinase domain occupies F650–I903. Residues L656–V664 and K679 contribute to the ATP site. The Proton acceptor role is filled by D771.

Belongs to the protein kinase superfamily. STE Ser/Thr protein kinase family. STE20 subfamily. The cofactor is Mg(2+).

The enzyme catalyses L-seryl-[protein] + ATP = O-phospho-L-seryl-[protein] + ADP + H(+). The catalysed reaction is L-threonyl-[protein] + ATP = O-phospho-L-threonyl-[protein] + ADP + H(+). Its function is as follows. May play a role in responding to changes in chemoattractant levels. In Dictyostelium discoideum (Social amoeba), this protein is Serine/threonine-protein kinase pakE.